The chain runs to 118 residues: Basic phospholipase A2 nigroxin A (118 aa).

Cystine bridges form between Cys11–Cys70, Cys25–Cys117, Cys27–Cys43, Cys42–Cys98, Cys49–Cys91, Cys59–Cys84, and Cys77–Cys89. Residues Tyr26, Gly28, and Gly30 each contribute to the Ca(2+) site. His46 is an active-site residue. Asp47 lines the Ca(2+) pocket. Asp92 is an active-site residue.

The protein belongs to the phospholipase A2 family. Group I subfamily. D49 sub-subfamily. It depends on Ca(2+) as a cofactor. In terms of tissue distribution, expressed by the venom gland.

It localises to the secreted. The enzyme catalyses a 1,2-diacyl-sn-glycero-3-phosphocholine + H2O = a 1-acyl-sn-glycero-3-phosphocholine + a fatty acid + H(+). Snake venom phospholipase A2 (PLA2) that has only a weak enzymatic activity. It has a myotoxic activity in vivo (dystrophic effect). PLA2 catalyzes the calcium-dependent hydrolysis of the 2-acyl groups in 3-sn-phosphoglycerides. This Micrurus nigrocinctus (Central American coral snake) protein is Basic phospholipase A2 nigroxin A.